The sequence spans 471 residues: Alpha-galactosidase (471 aa).

The signal sequence occupies residues 1 to 18; that stretch reads MFNLNFFNYTCHCEWCFW. An intrachain disulfide couples Cys-42 to Cys-74. The N-linked (GlcNAc...) asparagine glycan is linked to Asn-43. 2 residues coordinate substrate: Asp-72 and Asp-73. N-linked (GlcNAc...) asparagine glycosylation occurs at Asn-105. A disulfide bridge connects residues Cys-121 and Cys-151. Lys-147 contacts substrate. Asp-149 functions as the Nucleophile in the catalytic mechanism. Asn-175 carries N-linked (GlcNAc...) asparagine glycosylation. Arg-205 contributes to the substrate binding site. Asp-209 functions as the Proton donor in the catalytic mechanism. 2 disulfides stabilise this stretch: Cys-221/Cys-237 and Cys-223/Cys-230. A substrate-binding site is contributed by Gln-251. Asn-270, Asn-370, Asn-403, Asn-417, Asn-422, and Asn-454 each carry an N-linked (GlcNAc...) asparagine glycan.

This sequence belongs to the glycosyl hydrolase 27 family. Homotetramer.

Its subcellular location is the secreted. The enzyme catalyses Hydrolysis of terminal, non-reducing alpha-D-galactose residues in alpha-D-galactosides, including galactose oligosaccharides, galactomannans and galactolipids.. This chain is Alpha-galactosidase (MEL), found in Saccharomyces paradoxus (Yeast).